The sequence spans 322 residues: Glutamyl-Q tRNA(Asp) synthetase (322 aa).

L-glutamate contacts are provided by residues 28-32 (RFAPS) and E64. Residues 31–41 (PSPSGDLHFGS) carry the 'HIGH' region motif. Residues C120, C122, Y134, and C138 each coordinate Zn(2+). 2 residues coordinate L-glutamate: Y191 and R209. The 'KMSKS' region motif lies at 247 to 251 (KLSKQ). Position 250 (K250) interacts with ATP.

Belongs to the class-I aminoacyl-tRNA synthetase family. GluQ subfamily. Zn(2+) serves as cofactor.

In terms of biological role, catalyzes the tRNA-independent activation of glutamate in presence of ATP and the subsequent transfer of glutamate onto a tRNA(Asp). Glutamate is transferred on the 2-amino-5-(4,5-dihydroxy-2-cyclopenten-1-yl) moiety of the queuosine in the wobble position of the QUC anticodon. In Pectobacterium atrosepticum (strain SCRI 1043 / ATCC BAA-672) (Erwinia carotovora subsp. atroseptica), this protein is Glutamyl-Q tRNA(Asp) synthetase.